Here is a 363-residue protein sequence, read N- to C-terminus: Dihydroorotate dehydrogenase (quinone) (363 aa).

Residues 70–74 and Thr94 each bind FMN; that span reads AGFDK. Lys74 contacts substrate. Position 119 to 123 (119 to 123) interacts with substrate; that stretch reads NRMGF. Residues Asn147 and Asn180 each contribute to the FMN site. Residue Asn180 participates in substrate binding. Catalysis depends on Ser183, which acts as the Nucleophile. Substrate is bound at residue Asn185. FMN-binding residues include Lys216 and Thr244. 245–246 lines the substrate pocket; the sequence is NT. FMN contacts are provided by residues Gly270, Gly299, and 320 to 321; that span reads YT.

The protein belongs to the dihydroorotate dehydrogenase family. Type 2 subfamily. As to quaternary structure, monomer. The cofactor is FMN.

It is found in the cell membrane. The catalysed reaction is (S)-dihydroorotate + a quinone = orotate + a quinol. Its pathway is pyrimidine metabolism; UMP biosynthesis via de novo pathway; orotate from (S)-dihydroorotate (quinone route): step 1/1. Catalyzes the conversion of dihydroorotate to orotate with quinone as electron acceptor. The chain is Dihydroorotate dehydrogenase (quinone) from Corynebacterium diphtheriae (strain ATCC 700971 / NCTC 13129 / Biotype gravis).